The chain runs to 449 residues: Acetolactate synthase small subunit 1, chloroplastic (449 aa).

Residues 1–30 (MEHIQTRTTLSQLSTLPSDKRLGAIRFKCL) constitute a chloroplast transit peptide. ACT domains are found at residues 31–98 (LVMK…DLSK) and 259–333 (TLSM…DITH).

The protein belongs to the acetolactate synthase small subunit family. The acetolactate synthase complex contains both large catalytic subunits and small regulatory subunits.

The protein resides in the plastid. Its subcellular location is the chloroplast. It participates in amino-acid biosynthesis; L-isoleucine biosynthesis; L-isoleucine from 2-oxobutanoate: step 1/4. Its pathway is amino-acid biosynthesis; L-valine biosynthesis; L-valine from pyruvate: step 1/4. In terms of biological role, regulatory subunit of acetohydroxy-acid synthase. Probably involved in feedback inhibition by branched-chain amino acids. Not involved in herbicide tolerance. In Nicotiana plumbaginifolia (Leadwort-leaved tobacco), this protein is Acetolactate synthase small subunit 1, chloroplastic.